A 323-amino-acid polypeptide reads, in one-letter code: Fatty acid desaturase 4, chloroplastic (323 aa).

Residues methionine 1–valine 77 constitute a chloroplast transit peptide. The next 2 helical transmembrane spans lie at tryptophan 101 to phenylalanine 121 and leucine 131 to isoleucine 151. Positions glutamine 170–histidine 173 match the Histidine box-1 motif. The chain crosses the membrane as a helical span at residues leucine 204–phenylalanine 224. The Histidine box-2 signature appears at histidine 229–histidine 233. Residues histidine 258–histidine 262 carry the Histidine box-3 motif.

The protein belongs to the fatty acid desaturase CarF family. It depends on Fe(2+) as a cofactor.

It is found in the plastid. The protein localises to the chloroplast membrane. The catalysed reaction is a 1-acyl-2-hexadecanoyl-glycerolipid + 2 reduced [2Fe-2S]-[ferredoxin] + O2 + 2 H(+) = a 1-acyl-2-[(3E)-hexadec-3-enoyl]-glycerolipid + 2 oxidized [2Fe-2S]-[ferredoxin] + 2 H2O. The protein operates within lipid metabolism; fatty acid metabolism. In terms of biological role, fatty acid desaturase involved in the production of chloroplast-specific phosphatidylglycerol molecular species containing 16:1(3E). Catalyzes the formation of a trans double bond introduced close to the carboxyl group of palmitic acid, which is specifically esterified to the sn-2 glyceryl carbon of phosphatidylglycerol. In Arabidopsis thaliana (Mouse-ear cress), this protein is Fatty acid desaturase 4, chloroplastic.